Here is a 354-residue protein sequence, read N- to C-terminus: Sulfate/thiosulfate import ATP-binding protein CysA (354 aa).

Positions 3–237 (IEVRGLSKRF…PATPFVYGFL (235 aa)) constitute an ABC transporter domain. 35 to 42 (GPSGCGKT) lines the ATP pocket.

It belongs to the ABC transporter superfamily. Sulfate/tungstate importer (TC 3.A.1.6) family. The complex is composed of two ATP-binding proteins (CysA), two transmembrane proteins (CysT and CysW) and a solute-binding protein (CysP).

Its subcellular location is the cell inner membrane. The enzyme catalyses sulfate(out) + ATP + H2O = sulfate(in) + ADP + phosphate + H(+). It carries out the reaction thiosulfate(out) + ATP + H2O = thiosulfate(in) + ADP + phosphate + H(+). In terms of biological role, part of the ABC transporter complex CysAWTP involved in sulfate/thiosulfate import. Responsible for energy coupling to the transport system. In Bordetella parapertussis (strain 12822 / ATCC BAA-587 / NCTC 13253), this protein is Sulfate/thiosulfate import ATP-binding protein CysA.